Consider the following 312-residue polypeptide: MDKEWIEVEILTSSEAAEAVTGILYNTGVKGVSIEDSKDIEEREQSEDNLFDWVELEELNVREGATIKAYYKDDENFEHYFQYIKDSVLNLDRFGLDKGEGKVTAKKVDEQDWANNWKKYYKPTKIGNEIVVKPTWEDYNKKDNEIVIELDPGMAFGTGTHETTRLCVKALEEYVNEDSVVFDIGTGSGILSIAAAKLNAKHVVGVDLDPVAVDAAKENVELNNLDNIEILYGNLMEVVDGKANIVVANILADIIKILAEDVKKFVVEGGYFISSGIILDRKDDVIEKLQQCGFEIEKINVDGEWCCIIARA.

S-adenosyl-L-methionine is bound by residues threonine 164, glycine 185, aspartate 207, and asparagine 249.

It belongs to the methyltransferase superfamily. PrmA family.

The protein localises to the cytoplasm. It catalyses the reaction L-lysyl-[protein] + 3 S-adenosyl-L-methionine = N(6),N(6),N(6)-trimethyl-L-lysyl-[protein] + 3 S-adenosyl-L-homocysteine + 3 H(+). Methylates ribosomal protein L11. The chain is Ribosomal protein L11 methyltransferase from Clostridium novyi (strain NT).